We begin with the raw amino-acid sequence, 87 residues long: Small ribosomal subunit protein bS20 (87 aa).

It belongs to the bacterial ribosomal protein bS20 family.

In terms of biological role, binds directly to 16S ribosomal RNA. This Clostridium perfringens (strain 13 / Type A) protein is Small ribosomal subunit protein bS20.